The sequence spans 103 residues: Co-chaperonin GroES (103 aa).

It belongs to the GroES chaperonin family. In terms of assembly, heptamer of 7 subunits arranged in a ring. Interacts with the chaperonin GroEL.

It localises to the cytoplasm. In terms of biological role, together with the chaperonin GroEL, plays an essential role in assisting protein folding. The GroEL-GroES system forms a nano-cage that allows encapsulation of the non-native substrate proteins and provides a physical environment optimized to promote and accelerate protein folding. GroES binds to the apical surface of the GroEL ring, thereby capping the opening of the GroEL channel. The chain is Co-chaperonin GroES from Prochlorococcus marinus (strain MIT 9211).